An 872-amino-acid polypeptide reads, in one-letter code: Probable GPI-anchored adhesin-like protein PGA25 (872 aa).

The first 19 residues, 1-19, serve as a signal peptide directing secretion; it reads MKVTAVSSVLLTVAALTNA. A compositionally biased stretch (low complexity) spans 43–65; that stretch reads PAAAPAAQPAAQPTTQSPADQPT. Disordered regions lie at residues 43–383, 492–517, and 623–809; these read PAAA…TIIP, KPTG…DETD, and PDDW…ECDT. Residues 66–83 are compositionally biased toward polar residues; sequence VQSPVSSDQPSTAQPVAQ. Composition is skewed to low complexity over residues 84–110 and 125–171; these read NNLL…TRST and SSEA…SSSS. N-linked (GlcNAc...) asparagine glycosylation occurs at N92. The span at 196–207 shows a compositional bias: acidic residues; the sequence is ETDDEDCVEETE. Composition is skewed to low complexity over residues 208–225, 242–260, and 274–293; these read SPTS…VATT, SSAP…SSTT, and SSVP…NTTT. N-linked (GlcNAc...) asparagine glycosylation occurs at N290. The span at 317-328 shows a compositional bias: acidic residues; sequence AEEDDEECEDPT. Residues 349–363 are compositionally biased toward low complexity; the sequence is TSQSKTSVSSVVSKS. The segment covering 366–376 has biased composition (acidic residues); sequence EDDDDETECET. The span at 495 to 506 shows a compositional bias: polar residues; it reads GSGSITVLPTKS. 2 stretches are compositionally biased toward acidic residues: residues 624 to 635 and 646 to 659; these read DDWEDDGYEGED and DDGE…DDGE. Composition is skewed to gly residues over residues 666–692, 701–710, and 731–740; these read SSSG…GSGS, SSGGTWGGSG, and SWWGGSGSGS. Residues 741–760 are compositionally biased toward low complexity; that stretch reads SSGSSSGVSSGDSGSSSVTG. A compositionally biased stretch (gly residues) spans 761–771; it reads GSSGSWWGGSG. The segment covering 780–808 has biased composition (acidic residues); sequence DGYDDEDDQTPEPECDDEDDSWDDDEECD. Residue A845 is the site of GPI-anchor amidated alanine attachment. The propeptide at 846–872 is removed in mature form; it reads QSVTQIENIGGKVSASGLFVVLGLLLI.

This sequence belongs to the HYR1/IFF family. Post-translationally, the GPI-anchor is attached to the protein in the endoplasmic reticulum and serves to target the protein to the cell surface. There, the glucosamine-inositol phospholipid moiety is cleaved off and the GPI-modified mannoprotein is covalently attached via its lipidless GPI glycan remnant to the 1,6-beta-glucan of the outer cell wall layer.

It is found in the secreted. The protein localises to the cell wall. Its subcellular location is the membrane. Functionally, probable GPI-anchored cell wall protein involved in cell wall organization, hyphal growth, as well as in host-fungal interaction and virulence. The sequence is that of Probable GPI-anchored adhesin-like protein PGA25 (PGA25) from Candida albicans (strain SC5314 / ATCC MYA-2876) (Yeast).